A 291-amino-acid chain; its full sequence is Foldase protein PrsA 2 (291 aa).

Positions 1 to 20 (MKKKLILGLVMMMALFSLAA) are cleaved as a signal peptide. A lipid anchor (N-palmitoyl cysteine) is attached at C21. The S-diacylglycerol cysteine moiety is linked to residue C21. Positions 135–226 (QPDITVSHIL…YGYHIIQMDK (92 aa)) constitute a PpiC domain.

Belongs to the PrsA family.

It localises to the cell membrane. It catalyses the reaction [protein]-peptidylproline (omega=180) = [protein]-peptidylproline (omega=0). Plays a major role in protein secretion by helping the post-translocational extracellular folding of several secreted proteins. In Listeria innocua serovar 6a (strain ATCC BAA-680 / CLIP 11262), this protein is Foldase protein PrsA 2 (prsA2).